A 419-amino-acid chain; its full sequence is Coiled-coil domain-containing protein 85C (419 aa).

At alanine 2 the chain carries N-acetylalanine. 2 coiled-coil regions span residues 22-88 (ELLR…RELC) and 118-159 (HEVA…AALA). 2 disordered regions span residues 162–268 (GAAS…DPSS) and 307–348 (HSES…AGQK). Residues 164–175 (ASGGGGGGGGAG) are compositionally biased toward gly residues. Positions 176–189 (SRSSIDSQASLSGP) are enriched in low complexity. Position 178 is a phosphoserine (serine 178). A compositionally biased stretch (pro residues) spans 224–233 (PPPLLPPGPH). Residue serine 246 is modified to Phosphoserine. Residues 307-325 (HSESQLASLPPSYQDSLQN) are compositionally biased toward polar residues. The span at 329-338 (CPAPELPSPP) shows a compositional bias: pro residues.

It belongs to the CCDC85 family. In terms of assembly, may interact with ARVCF, CTNND1, CTNND2 and PKP4.

It localises to the cell junction. It is found in the tight junction. Its subcellular location is the adherens junction. May play a role in cell-cell adhesion and epithelium development through its interaction with proteins of the beta-catenin family. May play an important role in cortical development, especially in the maintenance of radial glia. This chain is Coiled-coil domain-containing protein 85C (CCDC85C), found in Homo sapiens (Human).